The following is a 468-amino-acid chain: Probable acid phosphatase DIA3 (468 aa).

The N-terminal stretch at 1–20 (MVKPVIFAICLGVLLSKALS) is a signal peptide. H76 (nucleophile) is an active-site residue. 7 N-linked (GlcNAc...) asparagine glycosylation sites follow: N98, N163, N193, N202, N238, N251, and N316. The active-site Proton donor is D339. N357, N391, N457, and N462 each carry an N-linked (GlcNAc...) asparagine glycan.

Belongs to the histidine acid phosphatase family.

The enzyme catalyses a phosphate monoester + H2O = an alcohol + phosphate. The polypeptide is Probable acid phosphatase DIA3 (DIA3) (Saccharomyces cerevisiae (strain ATCC 204508 / S288c) (Baker's yeast)).